A 313-amino-acid polypeptide reads, in one-letter code: Sideroflexin-4 (313 aa).

Helical transmembrane passes span 87-107 (AALL…VKSL), 141-161 (LLLG…PRLL), 175-191 (FIPV…NVIA), 230-247 (VVLF…AYFF), and 269-289 (VLVM…IGRI).

This sequence belongs to the sideroflexin family.

The protein localises to the mitochondrion inner membrane. Mitochondrial amino-acid transporter. Does not act as a serine transporter: not able to mediate transport of serine into mitochondria. The chain is Sideroflexin-4 from Bos taurus (Bovine).